Here is a 135-residue protein sequence, read N- to C-terminus: Probable histone H2A.1 (135 aa).

Belongs to the histone H2A family. As to quaternary structure, the nucleosome is a histone octamer containing two molecules each of H2A, H2B, H3 and H4 assembled in one H3-H4 heterotetramer and two H2A-H2B heterodimers. The octamer wraps approximately 147 bp of DNA.

Its subcellular location is the nucleus. It is found in the chromosome. Its function is as follows. Core component of nucleosome. Nucleosomes wrap and compact DNA into chromatin, limiting DNA accessibility to the cellular machineries which require DNA as a template. Histones thereby play a central role in transcription regulation, DNA repair, DNA replication and chromosomal stability. DNA accessibility is regulated via a complex set of post-translational modifications of histones, also called histone code, and nucleosome remodeling. The polypeptide is Probable histone H2A.1 (Oryza sativa subsp. japonica (Rice)).